The chain runs to 227 residues: NAD(P)H-hydrate epimerase (227 aa).

The YjeF N-terminal domain occupies M10–L227. N62–D66 is a binding site for (6S)-NADPHX. Positions 63 and 142 each coordinate K(+). Residues G146–P152 and D176 each bind (6S)-NADPHX. A K(+)-binding site is contributed by S179.

It belongs to the NnrE/AIBP family. K(+) is required as a cofactor.

It catalyses the reaction (6R)-NADHX = (6S)-NADHX. The enzyme catalyses (6R)-NADPHX = (6S)-NADPHX. Its function is as follows. Catalyzes the epimerization of the S- and R-forms of NAD(P)HX, a damaged form of NAD(P)H that is a result of enzymatic or heat-dependent hydration. This is a prerequisite for the S-specific NAD(P)H-hydrate dehydratase to allow the repair of both epimers of NAD(P)HX. The protein is NAD(P)H-hydrate epimerase of Roseobacter litoralis (strain ATCC 49566 / DSM 6996 / JCM 21268 / NBRC 15278 / OCh 149).